A 219-amino-acid chain; its full sequence is Ribosome maturation factor RimP (219 aa).

2 disordered regions span residues 1-38 (MTQRGRAAKPTGPTGRPRRTGGQRGTDRVGRGGDLATR) and 189-219 (VEFTRPGEPDAFDGTDEAGDFDDDDVEDEER). Residues 198 to 219 (DAFDGTDEAGDFDDDDVEDEER) are compositionally biased toward acidic residues.

Belongs to the RimP family.

Its subcellular location is the cytoplasm. In terms of biological role, required for maturation of 30S ribosomal subunits. The protein is Ribosome maturation factor RimP of Salinispora arenicola (strain CNS-205).